Here is a 3364-residue protein sequence, read N- to C-terminus: Salivary gland surface protein 1 (3364 aa).

Beta-propeller regions lie at residues 1–344 and 705–1216; these read MLRI…VVDA and FEQE…LKAL. Asn-59 carries N-linked (GlcNAc...) asparagine glycosylation. Cystine bridges form between Cys-251/Cys-297 and Cys-1128/Cys-1139. The rhs/YD-repeats stretch occupies residues 345–2733; it reads VEPKLDQGSP…PVSQIDPDGQ (2389 aa). An N-linked (GlcNAc...) asparagine glycan is attached at Asn-1149. The segment at 1345–1494 is carbohydrate-binding module (CBM); sequence NQELVQFLGF…VHVDHVRLSP (150 aa). Positions 1575-1715 are lectin carbohydrate-recognition domain (lectin-CRD); that stretch reads HSWVESFSPY…VGIKDVIVME (141 aa). Positions 2225–2304 are wedge domain; sequence HDKCDQNLIP…SEKMLEQGYP (80 aa). Intrachain disulfides connect Cys-2253/Cys-2285 and Cys-2407/Cys-2421. 5 helical membrane passes run 2734 to 2754, 2774 to 2794, 2805 to 2825, 2844 to 2864, and 2878 to 2898; these read IAVTLVLMIIGAIVGAYLGAA, IGLFAGAIMGAFAVYGGAATF, MIAGALATGVISVAGAFLGAA, WNGLLSGASIAVSFPSGFVGI, and MIYASLMVGGFLLFVYLGGGM. The interval 3126–3216 is tox-SGS; it reads YSPDSDGNQI…ARIAPAALRN (91 aa).

Probably cleaved at the C-terminus. In terms of tissue distribution, female saliva (at protein level). Female salivary gland (at protein level). Not detected in female carcass without salivary glands. Not detected in male tissues.

The protein resides in the cell membrane. Its subcellular location is the secreted. Functionally, (Microbial infection) Facilitates, but is not essential for, invasion of salivary glands by Plasmodium gallinaceum. Plays a role in Plasmodium gallinaceum oocyst development in mosquito midgut. Its function is as follows. (Microbial infection) Probably facilitates Zika virus replication in salivary glands. The chain is Salivary gland surface protein 1 from Aedes aegypti (Yellowfever mosquito).